We begin with the raw amino-acid sequence, 214 residues long: Redox-sensing transcriptional repressor Rex (214 aa).

Residues 17-56 (KYHRYLEELLKSDVDRISSKELSEKIGFTASQIRQDLNCF) constitute a DNA-binding region (H-T-H motif). 91–96 (GAGNIG) serves as a coordination point for NAD(+).

It belongs to the transcriptional regulatory Rex family. In terms of assembly, homodimer.

Its subcellular location is the cytoplasm. Functionally, modulates transcription in response to changes in cellular NADH/NAD(+) redox state. This is Redox-sensing transcriptional repressor Rex from Clostridium acetobutylicum (strain ATCC 824 / DSM 792 / JCM 1419 / IAM 19013 / LMG 5710 / NBRC 13948 / NRRL B-527 / VKM B-1787 / 2291 / W).